The chain runs to 427 residues: MSIIKSVYARQILDSRGNPTIEVDVCTEQGFVGRAAVPSGASTGLHEAMELRDKDSAVYLGKGVQKAIKHVKEIIAPVLIGRSVFNQQAIDTLLIELDGTLNKARLGANAILGTSIAVAKAAAMSLNIPLYQYIGGLNAYILPTPMINIFNGGAHADNNVDIQEFMVMPIKANSFAEALRMGVEVFHQLGRILKEKGLSTNVGDEGGYASNLPSNEAAMEFILQAIEKAGYQPGEDISIALDAASTEFYQAEKEVYHFKKSTGIKLTSTELVDFWKNWVQKYPIISIEDGMAEDDWEGWHQLTQAIGSKVQLVGDDLFVTNTKRLAKGIEQNIANAVLIKMNQVGTLSETLDTVNLAKKHGYQNIISHRSGETEDSTIADLAVALNAGQIKTGSVSRTDRTAKYNQLLRIEETLGEHARFAGHPFKK.

Gln-163 lines the (2R)-2-phosphoglycerate pocket. Glu-205 (proton donor) is an active-site residue. Residues Asp-242, Glu-288, and Asp-315 each contribute to the Mg(2+) site. (2R)-2-phosphoglycerate contacts are provided by Lys-340, Arg-369, Ser-370, and Lys-391. The active-site Proton acceptor is Lys-340.

It belongs to the enolase family. Requires Mg(2+) as cofactor.

The protein resides in the cytoplasm. It is found in the secreted. It localises to the cell surface. The enzyme catalyses (2R)-2-phosphoglycerate = phosphoenolpyruvate + H2O. The protein operates within carbohydrate degradation; glycolysis; pyruvate from D-glyceraldehyde 3-phosphate: step 4/5. Catalyzes the reversible conversion of 2-phosphoglycerate (2-PG) into phosphoenolpyruvate (PEP). It is essential for the degradation of carbohydrates via glycolysis. This is Enolase from Amoebophilus asiaticus (strain 5a2).